The sequence spans 316 residues: Porphobilinogen deaminase (316 aa).

C245 carries the post-translational modification S-(dipyrrolylmethanemethyl)cysteine.

The protein belongs to the HMBS family. In terms of assembly, monomer. It depends on dipyrromethane as a cofactor.

The catalysed reaction is 4 porphobilinogen + H2O = hydroxymethylbilane + 4 NH4(+). Its pathway is porphyrin-containing compound metabolism; protoporphyrin-IX biosynthesis; coproporphyrinogen-III from 5-aminolevulinate: step 2/4. It functions in the pathway porphyrin-containing compound metabolism; chlorophyll biosynthesis. Functionally, tetrapolymerization of the monopyrrole PBG into the hydroxymethylbilane pre-uroporphyrinogen in several discrete steps. This is Porphobilinogen deaminase from Prochlorococcus marinus (strain AS9601).